The following is a 322-amino-acid chain: Ubiquinone biosynthesis O-methyltransferase, mitochondrial (322 aa).

The N-terminal 37 residues, 1–37, are a transit peptide targeting the mitochondrion; it reads MLASVRVNQLQRLLLSARRLSSSPIIPPSRLLHQRLF. The tract at residues 46-75 is disordered; it reads AASFSSSHPKIQTLEGKASNKSRSTSSTTS. Positions 108, 139, 160, and 205 each coordinate S-adenosyl-L-methionine. Residues Glu206, Glu209, and His210 each coordinate Mg(2+).

Belongs to the class I-like SAM-binding methyltransferase superfamily. UbiG/COQ3 family. Component of a multi-subunit COQ enzyme complex. Mg(2+) is required as a cofactor.

The protein localises to the mitochondrion inner membrane. The catalysed reaction is a 3,4-dihydroxy-5-(all-trans-polyprenyl)benzoate + S-adenosyl-L-methionine = a 4-hydroxy-3-methoxy-5-(all-trans-polyprenyl)benzoate + S-adenosyl-L-homocysteine + H(+). The enzyme catalyses a 3-demethylubiquinone + S-adenosyl-L-methionine = a ubiquinone + S-adenosyl-L-homocysteine. It carries out the reaction a 3-demethylubiquinol + S-adenosyl-L-methionine = a ubiquinol + S-adenosyl-L-homocysteine + H(+). Its pathway is cofactor biosynthesis; ubiquinone biosynthesis. Functionally, O-methyltransferase required for two non-consecutive steps during ubiquinone biosynthesis. Catalyzes the 2 O-methylation of 3,4-dihydroxy-5-(all-trans-polyprenyl)benzoic acid into 4-hydroxy-3-methoxy-5-(all-trans-polyprenyl)benzoic acid. Also catalyzes the last step of ubiquinone biosynthesis by mediating methylation of 3-demethylubiquinone into ubiquinone. Also able to mediate the methylation of 3-demethylubiquinol into ubiquinol. In Arabidopsis thaliana (Mouse-ear cress), this protein is Ubiquinone biosynthesis O-methyltransferase, mitochondrial.